The following is a 429-amino-acid chain: Palmitoyltransferase ZDHHC23 (429 aa).

The Cytoplasmic portion of the chain corresponds to 1–81 (MKPVKKKKTE…RIPWLRGAKK (81 aa)). The helical transmembrane segment at 82–102 (VNISILPPLVLLPVLLRVASW) threads the bilayer. His-103 is a topological domain (lumenal). A helical membrane pass occupies residues 104-124 (FLLGVVVLTSLPMLALWYYYL). At 125-130 (THRRKE) the chain is on the cytoplasmic side. The helical transmembrane segment at 131–151 (QTLFFLSLGLFSLGYMYYVFL) threads the bilayer. Residues 152 to 159 (QEVVPQGH) are Lumenal-facing. A helical transmembrane segment spans residues 160 to 180 (VGPAQLALLTCGLFLILVALY). Over 181 to 296 (RAKKNPGYLS…NSCVGESNHQ (116 aa)) the chain is Cytoplasmic. The tract at residues 212 to 247 (QEKTKGFPGTDTSGSLNNRTLKDDAKGSSRVGLDSP) is disordered. The span at 221–230 (TDTSGSLNNR) shows a compositional bias: polar residues. The region spanning 253–303 (DWCAKCQLVRPARAWHCRICGICVRRMDHHCVWINSCVGESNHQAFILALS) is the DHHC domain. Residue Cys-283 is the S-palmitoyl cysteine intermediate of the active site. Residues 297 to 317 (AFILALSIFLLTSVYGISLTL) form a helical membrane-spanning segment. Residues 318–347 (NTICRDRSLFTALFYCPGVYANYSSALSFT) are Lumenal-facing. The helical transmembrane segment at 348–368 (CVWYSVIITAGMAYIFLIQLI) threads the bilayer. Topologically, residues 369-429 (NISYNVTERE…TVHTPAEDIV (61 aa)) are cytoplasmic. The interaction with NOS1 stretch occupies residues 426 to 429 (EDIV).

This sequence belongs to the DHHC palmitoyltransferase family. As to quaternary structure, interacts with NOS1. In terms of tissue distribution, expressed in the brain (at protein level), with highest levels in olfactory bulb, piriform cortex and hippocampus.

The protein localises to the golgi apparatus membrane. It localises to the golgi apparatus. It is found in the trans-Golgi network membrane. It catalyses the reaction L-cysteinyl-[protein] + hexadecanoyl-CoA = S-hexadecanoyl-L-cysteinyl-[protein] + CoA. In terms of biological role, palmitoyltransferase that could catalyze the addition of palmitate onto various protein substrates and be involved in a variety of cellular processes. Palmitoyltransferase that mediates palmitoylation of KCNMA1, regulating localization of KCNMA1 to the plasma membrane. May be involved in NOS1 regulation and targeting to the synaptic membrane. The sequence is that of Palmitoyltransferase ZDHHC23 from Rattus norvegicus (Rat).